We begin with the raw amino-acid sequence, 130 residues long: Small ribosomal subunit protein uS8 (130 aa).

It belongs to the universal ribosomal protein uS8 family. As to quaternary structure, part of the 30S ribosomal subunit. Contacts proteins S5 and S12.

Its function is as follows. One of the primary rRNA binding proteins, it binds directly to 16S rRNA central domain where it helps coordinate assembly of the platform of the 30S subunit. In Acidiphilium cryptum (strain JF-5), this protein is Small ribosomal subunit protein uS8.